Consider the following 551-residue polypeptide: Cleavage and polyadenylation specificity factor subunit 6 (551 aa).

Residues 1–213 form a necessary for interaction with NXF1 region; the sequence is MADGVDHIDI…RGRFPGAVPG (213 aa). The RRM domain maps to 81-161; the sequence is IALYIGNLTW…QSPVVTPCNK (81 aa). The necessary for interaction with NUDT21/CPSF5 stretch occupies residues 81 to 161; that stretch reads IALYIGNLTW…QSPVVTPCNK (81 aa). The segment at 81–161 is necessary for nuclear paraspeckles localization; the sequence is IALYIGNLTW…QSPVVTPCNK (81 aa). At Thr-157 the chain carries Phosphothreonine. Polar residues predominate over residues 169-180; the sequence is MQSRKTTQSGQM. 2 disordered regions span residues 169–411 and 477–551; these read MQSR…PLSE and LHGI…YRHR. A compositionally biased stretch (gly residues) spans 184-193; that stretch reads GKAGPPGGGS. The GAR signature appears at 202-206; the sequence is RGRGR. Residues 207 to 219 show a composition bias toward low complexity; sequence FPGAVPGGDRFPG. 3 stretches are compositionally biased toward pro residues: residues 220–265, 285–366, and 377–388; these read PAGP…PLAG, GQPP…PPPT, and GPPPTDPYGRPP. The segment covering 389-404 has biased composition (basic and acidic residues); the sequence is PYDRGDYGPPGREMDT. Residues Thr-404 and Thr-407 each carry the phosphothreonine modification. The sufficient for nuclear speckle localization stretch occupies residues 404–551; it reads TARTPLSEAE…RDREREYRHR (148 aa). The segment at 405–551 is necessary for RNA-binding; sequence ARTPLSEAEF…RDREREYRHR (147 aa). The tract at residues 481-551 is necessary for interaction with SRSF3, SRSF7 and TRA2B/SFRS10; sequence ESKSYGSGSR…RDREREYRHR (71 aa). Over residues 489–503 the composition is skewed to basic and acidic residues; it reads SRRERSRERDHSRSR. Residues 490–551 are arg/Ser-rich domain; that stretch reads RRERSRERDH…RDREREYRHR (62 aa). Phosphoserine occurs at positions 494, 500, 511, 513, and 525. Positions 504-514 are enriched in basic residues; it reads EKSRRHKSRSR. Residues 510 to 551 are sufficient for nuclear targeting; that stretch reads KSRSRDRHDDYYRERSRERERHRDRDRDRDRERDREREYRHR. Basic and acidic residues predominate over residues 515–551; that stretch reads DRHDDYYRERSRERERHRDRDRDRDRERDREREYRHR.

The protein belongs to the RRM CPSF6/7 family. In terms of assembly, component of the cleavage factor Im (CFIm) complex which is a heterotetramer composed of two subunits of NUDT21/CPSF5 and two subunits of CPSF6 or CPSF7 or a heterodimer of CPSF6 and CPSF7. The cleavage factor Im (CFIm) complex associates with the CPSF and CSTF complexes to promote the assembly of the core mRNA 3'-processing machinery. Associates with the exon junction complex (EJC). Associates with the 80S ribosome particle. Interacts (via the RRM domain) with NUDT21/CPSF5; this interaction is direct and enhances binding to RNA. Interacts (via Arg/Ser-rich domain) with FIP1L1 (preferentially via unphosphorylated form and Arg/Glu/Asp-rich domain); this interaction mediates, at least in part, the interaction between the CFIm and CPSF complexes and may be inhibited by CPSF6 hyper-phosphorylation. Interacts (via N-terminus) with NXF1; this interaction is direct. Interacts with SRSF3. Interacts with SRSF7. Interacts with SNRNP70. Interacts with TRA2B/SFRS10. Interacts with UPF1. Interacts with UPF3B. Interacts with VIRMA. Interacts (via Arg/Ser-rich domain) with TNPO3; promoting nuclear import of CPSF6 independently of its phosphorylation status. Interacts with YTHDC1. Phosphorylated. Phosphorylated in the Arg/Ser-rich domain by SRPK1, in vitro. In terms of processing, symmetrically dimethylated on arginine residues by PRMT5 in a WDR77- and CLNS1A-dependent manner. Asymmetrically dimethylated on arginine residues by PRMT1. Post-translationally, symmetrically dimethylated on arginine residues in the GAR motif by PRMT5 in a WDR77- and CLNS1A-dependent manner. Asymmetrically dimethylated on arginine residues in the GAR motif by PRMT1. In terms of tissue distribution, expressed in testis. Expressed in male germ cells (at protein level).

The protein localises to the nucleus. It localises to the nucleoplasm. It is found in the nucleus speckle. The protein resides in the cytoplasm. In terms of biological role, component of the cleavage factor Im (CFIm) complex that functions as an activator of the pre-mRNA 3'-end cleavage and polyadenylation processing required for the maturation of pre-mRNA into functional mRNAs. CFIm contributes to the recruitment of multiprotein complexes on specific sequences on the pre-mRNA 3'-end, so called cleavage and polyadenylation signals (pA signals). Most pre-mRNAs contain multiple pA signals, resulting in alternative cleavage and polyadenylation (APA) producing mRNAs with variable 3'-end formation. The CFIm complex acts as a key regulator of cleavage and polyadenylation site choice during APA through its binding to 5'-UGUA-3' elements localized in the 3'-untranslated region (UTR) for a huge number of pre-mRNAs. CPSF6 enhances NUDT21/CPSF5 binding to 5'-UGUA-3' elements localized upstream of pA signals and promotes RNA looping, and hence activates directly the mRNA 3'-processing machinery. Plays a role in mRNA export. The polypeptide is Cleavage and polyadenylation specificity factor subunit 6 (Mus musculus (Mouse)).